Here is a 303-residue protein sequence, read N- to C-terminus: Signal recognition particle receptor FtsY (303 aa).

GTP contacts are provided by residues 108–115 (GVNGAGKT), 190–194 (DTAGR), and 254–257 (TKLD).

Belongs to the GTP-binding SRP family. FtsY subfamily. In terms of assembly, part of the signal recognition particle protein translocation system, which is composed of SRP and FtsY. SRP is a ribonucleoprotein composed of Ffh and a 4.5S RNA molecule.

The protein localises to the cell inner membrane. It is found in the cytoplasm. It carries out the reaction GTP + H2O = GDP + phosphate + H(+). Functionally, involved in targeting and insertion of nascent membrane proteins into the cytoplasmic membrane. Acts as a receptor for the complex formed by the signal recognition particle (SRP) and the ribosome-nascent chain (RNC). Interaction with SRP-RNC leads to the transfer of the RNC complex to the Sec translocase for insertion into the membrane, the hydrolysis of GTP by both Ffh and FtsY, and the dissociation of the SRP-FtsY complex into the individual components. The polypeptide is Signal recognition particle receptor FtsY (Rickettsia felis (strain ATCC VR-1525 / URRWXCal2) (Rickettsia azadi)).